Consider the following 316-residue polypeptide: Ribosomal RNA small subunit methyltransferase H (316 aa).

S-adenosyl-L-methionine contacts are provided by residues 35–37 (SGH), aspartate 55, phenylalanine 84, aspartate 105, and glutamine 112.

This sequence belongs to the methyltransferase superfamily. RsmH family.

Its subcellular location is the cytoplasm. It carries out the reaction cytidine(1402) in 16S rRNA + S-adenosyl-L-methionine = N(4)-methylcytidine(1402) in 16S rRNA + S-adenosyl-L-homocysteine + H(+). Functionally, specifically methylates the N4 position of cytidine in position 1402 (C1402) of 16S rRNA. The sequence is that of Ribosomal RNA small subunit methyltransferase H from Streptococcus pyogenes serotype M6 (strain ATCC BAA-946 / MGAS10394).